The chain runs to 318 residues: ADP-ribosyl cyclase/cyclic ADP-ribose hydrolase 2 (318 aa).

An N-terminal signal peptide occupies residues 1 to 32 (MAAQGCAASRLLQLLLQLLLLLLLLAAGGARA). 3 disulfides stabilise this stretch: Cys51/Cys67, Cys83/Cys163, and Cys144/Cys157. N-linked (GlcNAc...) asparagine glycosylation is found at Asn66 and Asn95. Position 109 (Trp109) interacts with NAD(+). Residue Trp109 coordinates nicotinamide. Asn148 carries N-linked (GlcNAc...) asparagine glycosylation. Residue Trp172 participates in NAD(+) binding. A glycan (N-linked (GlcNAc...) asparagine) is linked at Asn192. Glu210 is an NAD(+) binding site. 2 disulfide bridges follow: Cys238–Cys259 and Cys271–Cys280. Ala293 is lipidated: GPI-anchor amidated alanine. Residues 294–318 (PSLYTEQRAGLIIPLFLVLASRTQL) constitute a propeptide, removed in mature form.

It belongs to the ADP-ribosyl cyclase family. In terms of assembly, homodimer. In terms of tissue distribution, expressed in various tissues including placenta, lung, liver and kidney.

It is found in the cell membrane. The enzyme catalyses NAD(+) + H2O = ADP-D-ribose + nicotinamide + H(+). It catalyses the reaction NAD(+) = cyclic ADP-beta-D-ribose + nicotinamide + H(+). It carries out the reaction cyclic ADP-beta-D-ribose + H2O = ADP-D-ribose. ADP-ribosyl cyclase and cADPR hydrolase activities are both activated by Zn(2+) or Mn(2+), and inhibited by Cu(2+), while Mg(2+) and Ca(2+) do not have any significant influence. In terms of biological role, catalyzes both the synthesis of cyclic ADP-beta-D-ribose (cADPR) from NAD(+), and its hydrolysis to ADP-D-ribose (ADPR). Cyclic ADPR is known to serve as an endogenous second messenger that elicits calcium release from intracellular stores, and thus regulates the mobilization of intracellular calcium. May be involved in pre-B-cell growth. The sequence is that of ADP-ribosyl cyclase/cyclic ADP-ribose hydrolase 2 (BST1) from Homo sapiens (Human).